The primary structure comprises 150 residues: Protein-arginine-phosphatase (150 aa).

Cys7 (nucleophile) is an active-site residue. A substrate-binding site is contributed by 8-13; sequence TGNTCR. Residue Arg13 is part of the active site. Asp118 acts as the Proton donor/acceptor in catalysis.

The protein belongs to the low molecular weight phosphotyrosine protein phosphatase family.

It carries out the reaction N(omega)-phospho-L-arginyl-[protein] + H2O = L-arginyl-[protein] + phosphate. Its activity is regulated as follows. Efficiently inhibited by Cu(2+) ion, Zn(2+) ion, sodium pyrophosphate and N-ethylmaleimide, while the addition of Mg(2+), Ca(2+) or Fe(3+) ions has minimal effect. Inhibited in a competitive manner by vanadate. Its function is as follows. Catalyzes the specific dephosphorylation of phosphoarginine residues in a large number of proteins. Counteracts the protein arginine kinase McsB in vivo. Can dephosphorylate CtsR-P; thus, can restore the DNA-binding ability of the CtsR repressor by reversing the McsB-mediated phosphorylation. Is the only active pArg phosphatase present in B.subtilis. Exhibits almost no activity against pSer, pThr, or pTyr peptides. Appears to play a role in B.subtilis stress resistance. Protein arginine phosphorylation has a physiologically important role and is involved in the regulation of many critical cellular processes, such as protein homeostasis, motility, competence, and stringent and stress responses, by regulating gene expression and protein activity. The polypeptide is Protein-arginine-phosphatase (ywlE) (Bacillus subtilis (strain 168)).